Here is a 244-residue protein sequence, read N- to C-terminus: Putative quercetin 2,3-dioxygenase Mb0187c (244 aa).

Residues H60, H62, H104, and E106 each contribute to the a divalent metal cation site.

The protein belongs to the pirin family. Requires a divalent metal cation as cofactor.

The catalysed reaction is quercetin + O2 = 2-(3,4-dihydroxybenzoyloxy)-4,6-dihydroxybenzoate + CO. Its pathway is flavonoid metabolism; quercetin degradation. In terms of biological role, putative quercetin 2,3-dioxygenase. The protein is Putative quercetin 2,3-dioxygenase Mb0187c of Mycobacterium bovis (strain ATCC BAA-935 / AF2122/97).